A 375-amino-acid chain; its full sequence is tRNA-specific 2-thiouridylase MnmA (375 aa).

Residues 17 to 24 and Met-43 each bind ATP; that span reads GMSGGVDS. The segment at 103-105 is interaction with target base in tRNA; it reads NPD. Cys-108 (nucleophile) is an active-site residue. A disulfide bridge connects residues Cys-108 and Cys-204. Residue Gly-132 coordinates ATP. Residues 154–156 are interaction with tRNA; the sequence is KDQ. Residue Cys-204 is the Cysteine persulfide intermediate of the active site. Positions 316-317 are interaction with tRNA; sequence RY.

Belongs to the MnmA/TRMU family.

The protein localises to the cytoplasm. The catalysed reaction is S-sulfanyl-L-cysteinyl-[protein] + uridine(34) in tRNA + AH2 + ATP = 2-thiouridine(34) in tRNA + L-cysteinyl-[protein] + A + AMP + diphosphate + H(+). Its function is as follows. Catalyzes the 2-thiolation of uridine at the wobble position (U34) of tRNA, leading to the formation of s(2)U34. The polypeptide is tRNA-specific 2-thiouridylase MnmA (Stutzerimonas stutzeri (strain A1501) (Pseudomonas stutzeri)).